A 608-amino-acid chain; its full sequence is Protein UL27 (608 aa).

The span at 1–13 shows a compositional bias: pro residues; that stretch reads MNPVDQPPPPLPT. The interval 1 to 33 is disordered; that stretch reads MNPVDQPPPPLPTQQPEEQAKEDHDDGDERLFR. The span at 18–33 shows a compositional bias: basic and acidic residues; sequence EQAKEDHDDGDERLFR.

Belongs to the herpesviridae U4 family. In terms of assembly, interacts with host KAT5, PSME3 and EP400.

The protein localises to the host nucleus. It localises to the host nucleolus. Promotes a cell cycle arrest in G0/G1 by inducing the proteasomal degradation of host histone acetyltransferase KAT5/Tip60. This chain is Protein UL27 (UL27), found in Human cytomegalovirus (strain AD169) (HHV-5).